The chain runs to 70 residues: Large ribosomal subunit protein uL29 (70 aa).

It belongs to the universal ribosomal protein uL29 family.

The polypeptide is Large ribosomal subunit protein uL29 (Clostridium botulinum (strain Eklund 17B / Type B)).